Consider the following 317-residue polypeptide: UDP-3-O-acylglucosamine N-acyltransferase (317 aa).

Catalysis depends on His-229, which acts as the Proton acceptor.

This sequence belongs to the transferase hexapeptide repeat family. LpxD subfamily. Homotrimer.

It carries out the reaction a UDP-3-O-[(3R)-3-hydroxyacyl]-alpha-D-glucosamine + a (3R)-hydroxyacyl-[ACP] = a UDP-2-N,3-O-bis[(3R)-3-hydroxyacyl]-alpha-D-glucosamine + holo-[ACP] + H(+). It participates in bacterial outer membrane biogenesis; LPS lipid A biosynthesis. Catalyzes the N-acylation of UDP-3-O-acylglucosamine using 3-hydroxyacyl-ACP as the acyl donor. Is involved in the biosynthesis of lipid A, a phosphorylated glycolipid that anchors the lipopolysaccharide to the outer membrane of the cell. The chain is UDP-3-O-acylglucosamine N-acyltransferase from Campylobacter curvus (strain 525.92).